The sequence spans 121 residues: Homeobox protein HD-6 (121 aa).

Positions 28-87 (PKRSRIQLHDWQSMLLEHSFRMNPYPDRIEKYNLFLKTKIPMKNVKIWFQNRRAREKSFY) form a DNA-binding region, homeobox.

It localises to the nucleus. The protein is Homeobox protein HD-6 (HD-6) of Encephalitozoon cuniculi (strain GB-M1) (Microsporidian parasite).